A 213-amino-acid chain; its full sequence is ATP-dependent dethiobiotin synthetase BioD 2 (213 aa).

ATP is bound at residue 13-18 (DIGKTI). A Mg(2+)-binding site is contributed by Thr-17. The active site involves Lys-38. Thr-42 contacts substrate. Residues Asp-50 and 115–118 (EGAG) contribute to the ATP site. Residues Asp-50 and Glu-115 each contribute to the Mg(2+) site.

Belongs to the dethiobiotin synthetase family. In terms of assembly, homodimer. Mg(2+) serves as cofactor.

It is found in the cytoplasm. The catalysed reaction is (7R,8S)-7,8-diammoniononanoate + CO2 + ATP = (4R,5S)-dethiobiotin + ADP + phosphate + 3 H(+). It participates in cofactor biosynthesis; biotin biosynthesis; biotin from 7,8-diaminononanoate: step 1/2. Functionally, catalyzes a mechanistically unusual reaction, the ATP-dependent insertion of CO2 between the N7 and N8 nitrogen atoms of 7,8-diaminopelargonic acid (DAPA, also called 7,8-diammoniononanoate) to form a ureido ring. The chain is ATP-dependent dethiobiotin synthetase BioD 2 from Pasteurella multocida (strain Pm70).